A 523-amino-acid chain; its full sequence is Cytochrome P450 52A3-A (523 aa).

A helical transmembrane segment spans residues 17–34; sequence WYTILFGAAVTYFLSIAL. Position 471 (C471) interacts with heme.

This sequence belongs to the cytochrome P450 family. Requires heme as cofactor.

The protein localises to the membrane. Together with an NADPH cytochrome P450 the enzyme system catalyzes the terminal hydroxylation as the first step in the assimilation of alkanes and fatty acids. The sequence is that of Cytochrome P450 52A3-A (CYP52A3-A) from Candida maltosa (Yeast).